Reading from the N-terminus, the 404-residue chain is Protein L-Myc-1b (404 aa).

Disordered regions lie at residues 175–195 (KKQV…EEID) and 238–331 (QQHN…FLER). Positions 287–315 (VPAQSPTVSASPTHTSYHLKSQPSSPQSS) are enriched in polar residues. Residues 321–373 (DKRKTHNFLERKRRNDLRSRFLALRDEIPGLVDCPKTPKVVILTKATEYLRTL) enclose the bHLH domain. Positions 373-401 (LHVSDRQKAQEKKQLKSKQQQLLRRLAEL) are leucine-zipper.

Efficient DNA binding requires dimerization with another bHLH protein. Binds DNA as a heterodimer with max.

Its subcellular location is the nucleus. The polypeptide is Protein L-Myc-1b (Danio rerio (Zebrafish)).